The primary structure comprises 390 residues: RNA polymerase sigma factor SigA (390 aa).

Residues 48–57 are compositionally biased toward acidic residues; that stretch reads FLEPQTDEDD. The tract at residues 48–75 is disordered; it reads FLEPQTDEDDAKSGKAAKSRRRTQSKKK. A compositionally biased stretch (basic residues) spans 62–75; the sequence is KAAKSRRRTQSKKK. Residues 158–228 form a sigma-70 factor domain-2 region; sequence MVQSNLRLVV…TRAIADQSRT (71 aa). The Interaction with polymerase core subunit RpoC motif lies at 182–185; it reads DLIQ. The sigma-70 factor domain-3 stretch occupies residues 237–312; the sequence is ETISRIKKTT…ESDGETPEDQ (76 aa). Residues 325–378 are sigma-70 factor domain-4; that stretch reads VLDSLSPRERDVLRLRYGLDDGRMKTLEEIGQIFNVTRERIRQIEAKALRKLRH. The H-T-H motif DNA-binding region spans 351–370; that stretch reads LEEIGQIFNVTRERIRQIEA.

This sequence belongs to the sigma-70 factor family. RpoD/SigA subfamily. In terms of assembly, interacts transiently with the RNA polymerase catalytic core.

It is found in the cytoplasm. In terms of biological role, sigma factors are initiation factors that promote the attachment of RNA polymerase to specific initiation sites and are then released. This sigma factor is the primary sigma factor during exponential growth. This is RNA polymerase sigma factor SigA from Nostoc sp. (strain PCC 7120 / SAG 25.82 / UTEX 2576).